We begin with the raw amino-acid sequence, 422 residues long: MRRYQFTSESVTEGHPDKVCDQISDAILDGILEKDPTARVACETLVKTGMAVVAGEITTSAWVDMPVVVRNTIKDIGYTDAAMGFDYETCAVLTAIEKQSPDISRGVTEGEGLFKEQGAGDQGLMFGYATDETSELMPSPISYAHRLARKLADLRKSKKLDWLRPDGKTQVTIEYEDQTPVRVSAVVVSTQHSPEVKHKTIVDAVRSLIIEKCIPAKLMDKSTKIYVNPTGRFVVGGPFGDAGLTGRKIIVDTYGGMGRHGGGAFSGKDPTKVDRSACYYARYVAKNVVASKLAARCEVQIAYAIGVAQPVGVHVNTFGTGRVGEDVLEKYIMQNFDMRPKAIIEQLDLLKPIYRKTAAYGHFGRDEFTWEKTDRAAKLAEDLLRPTLAAVPATTNGAGSKNGSGSKKEPKRKGKKETGAQA.

Residue H15 coordinates ATP. Residue D17 participates in Mg(2+) binding. E43 serves as a coordination point for K(+). L-methionine-binding residues include E56 and Q99. The segment at 99-109 (QSPDISRGVTE) is flexible loop. ATP contacts are provided by residues 166–168 (DGK), 232–233 (RF), D241, 247–248 (RK), A264, and K268. D241 provides a ligand contact to L-methionine. L-methionine is bound at residue K272. The tract at residues 390 to 422 (AVPATTNGAGSKNGSGSKKEPKRKGKKETGAQA) is disordered.

The protein belongs to the AdoMet synthase family. Homotetramer; dimer of dimers. It depends on Mg(2+) as a cofactor. K(+) serves as cofactor.

It localises to the cytoplasm. It catalyses the reaction L-methionine + ATP + H2O = S-adenosyl-L-methionine + phosphate + diphosphate. It participates in amino-acid biosynthesis; S-adenosyl-L-methionine biosynthesis; S-adenosyl-L-methionine from L-methionine: step 1/1. In terms of biological role, catalyzes the formation of S-adenosylmethionine (AdoMet) from methionine and ATP. The overall synthetic reaction is composed of two sequential steps, AdoMet formation and the subsequent tripolyphosphate hydrolysis which occurs prior to release of AdoMet from the enzyme. The polypeptide is S-adenosylmethionine synthase (Sorangium cellulosum (strain So ce56) (Polyangium cellulosum (strain So ce56))).